A 151-amino-acid chain; its full sequence is UPF0178 protein PFL_5989 (151 aa).

Belongs to the UPF0178 family.

The protein is UPF0178 protein PFL_5989 of Pseudomonas fluorescens (strain ATCC BAA-477 / NRRL B-23932 / Pf-5).